The chain runs to 258 residues: DNA repair protein RecO (258 aa).

It belongs to the RecO family.

Functionally, involved in DNA repair and RecF pathway recombination. The polypeptide is DNA repair protein RecO (Desulfatibacillum aliphaticivorans).